The primary structure comprises 407 residues: Indoleamine 2,3-dioxygenase 1 (407 aa).

H350 contributes to the heme b binding site. The segment at 362 to 388 is disordered; that stretch reads SKQKPMGGHKSEEPSNTENRGTGGTDV.

It belongs to the indoleamine 2,3-dioxygenase family. Monomer. Heme b is required as a cofactor.

The protein resides in the cytoplasm. The protein localises to the cytosol. The enzyme catalyses D-tryptophan + O2 = N-formyl-D-kynurenine. The catalysed reaction is L-tryptophan + O2 = N-formyl-L-kynurenine. Its activity is regulated as follows. Activity is inhibited by and MTH-trp (methylthiohydantoin-DL-tryptophan), modestly inhibited by L-1MT (1-methyl-L-tryptophan) but not D-1MT (1-methyl-D-tryptophan). Functionally, catalyzes the first and rate limiting step of the catabolism of the essential amino acid tryptophan along the kynurenine pathway. Involved in the peripheral immune tolerance, contributing to maintain homeostasis by preventing autoimmunity or immunopathology that would result from uncontrolled and overreacting immune responses. Tryptophan shortage inhibits T lymphocytes division and accumulation of tryptophan catabolites induces T-cell apoptosis and differentiation of regulatory T-cells. Acts as a suppressor of anti-tumor immunity. Limits the growth of intracellular pathogens by depriving tryptophan. Protects the fetus from maternal immune rejection. The sequence is that of Indoleamine 2,3-dioxygenase 1 from Rattus norvegicus (Rat).